The sequence spans 308 residues: Aspartate carbamoyltransferase catalytic subunit (308 aa).

Carbamoyl phosphate-binding residues include Arg-59 and Thr-60. Lys-87 contributes to the L-aspartate binding site. Carbamoyl phosphate is bound by residues Arg-109, His-139, and Gln-142. The L-aspartate site is built by Arg-172 and Arg-224. Carbamoyl phosphate contacts are provided by Ala-265 and Pro-266.

It belongs to the aspartate/ornithine carbamoyltransferase superfamily. ATCase family. As to quaternary structure, heterododecamer (2C3:3R2) of six catalytic PyrB chains organized as two trimers (C3), and six regulatory PyrI chains organized as three dimers (R2).

It carries out the reaction carbamoyl phosphate + L-aspartate = N-carbamoyl-L-aspartate + phosphate + H(+). It functions in the pathway pyrimidine metabolism; UMP biosynthesis via de novo pathway; (S)-dihydroorotate from bicarbonate: step 2/3. Functionally, catalyzes the condensation of carbamoyl phosphate and aspartate to form carbamoyl aspartate and inorganic phosphate, the committed step in the de novo pyrimidine nucleotide biosynthesis pathway. The chain is Aspartate carbamoyltransferase catalytic subunit from Streptococcus mutans serotype c (strain ATCC 700610 / UA159).